The following is a 266-amino-acid chain: MDLFQTLVLALVQGLTEFLPISSAAHLILVPELTDWDDQGLAFDVATHVGSLAAVVIYFRHELRRMTAEWLGSLAGRGLTPDAKLAWAVGLGTIPAGLAGLLFHDIIATHLRSAQVIAMATIGFAVLLLFADVSGKRTRDEHSITWKDVLVIGVAQALALIPGTSRSGITITAALLMGFTRQAAARYSFLLSIPIIALAGGFEILGLVKEPEENIQWGMIVLGALVAGVSAYLCIHYFLKLLAKMTMLPFVIYRLVLGAFLLFLFW.

A run of 7 helical transmembrane segments spans residues 8 to 28 (VLAL…AHLI), 39 to 59 (QGLA…VIYF), 87 to 107 (WAVG…HDII), 113 to 133 (SAQV…FADV), 188 to 208 (SFLL…LGLV), 219 to 239 (MIVL…HYFL), and 246 to 266 (TMLP…FLFW).

Belongs to the UppP family.

It localises to the cell inner membrane. It catalyses the reaction di-trans,octa-cis-undecaprenyl diphosphate + H2O = di-trans,octa-cis-undecaprenyl phosphate + phosphate + H(+). Catalyzes the dephosphorylation of undecaprenyl diphosphate (UPP). Confers resistance to bacitracin. This is Undecaprenyl-diphosphatase from Thioalkalivibrio sulfidiphilus (strain HL-EbGR7).